Reading from the N-terminus, the 360-residue chain is MLVWLAEHLVKYYSGFNVFSYLTFRAIVSLLTALFISLWMGPRMIARLQKLSFGQVVRNDGPESHFSKRGTPTMGGIMILTAIVISVLLWAYPSNPYVWCVLVVLIGYGIIGFVDDYRKVVRKDTKGLIARWKYFWMSVIALGVAFALYLVGKDTPATQLVVPFFKDVMPQLGLFYILLSYFVIVGTGNAVNLTDGLDGLAIMPTVFVAAGFALVAWATGNMNFANYLHIPYLRHAGELVIVCTAIVGAGLGFLWFNTYPAQVFMGDVGSLALGGALGIIAVLLRQEFLLVIMGGVFVVETLSVILQVGSFKLRGQRIFRMAPIHHHYELKGWPEPRVIVRFWIISLMLVLIGLATLKVR.

The Periplasmic segment spans residues 1–25 (MLVWLAEHLVKYYSGFNVFSYLTFR). A helical transmembrane segment spans residues 26–46 (AIVSLLTALFISLWMGPRMIA). Residues 47-71 (RLQKLSFGQVVRNDGPESHFSKRGT) are Cytoplasmic-facing. The helical transmembrane segment at 72-92 (PTMGGIMILTAIVISVLLWAY) threads the bilayer. Residue Pro-93 is a topological domain, periplasmic. Residues 94-114 (SNPYVWCVLVVLIGYGIIGFV) form a helical membrane-spanning segment. Topologically, residues 115-131 (DDYRKVVRKDTKGLIAR) are cytoplasmic. The chain crosses the membrane as a helical span at residues 132 to 152 (WKYFWMSVIALGVAFALYLVG). Topologically, residues 153 to 167 (KDTPATQLVVPFFKD) are periplasmic. A helical transmembrane segment spans residues 168–188 (VMPQLGLFYILLSYFVIVGTG). At 189–198 (NAVNLTDGLD) the chain is on the cytoplasmic side. The helical transmembrane segment at 199-219 (GLAIMPTVFVAAGFALVAWAT) threads the bilayer. Over 220–235 (GNMNFANYLHIPYLRH) the chain is Periplasmic. Residues 236 to 256 (AGELVIVCTAIVGAGLGFLWF) traverse the membrane as a helical segment. Topologically, residues 257 to 262 (NTYPAQ) are cytoplasmic. Residues 263–283 (VFMGDVGSLALGGALGIIAVL) traverse the membrane as a helical segment. Residues 284–287 (LRQE) lie on the Periplasmic side of the membrane. Residues 288-308 (FLLVIMGGVFVVETLSVILQV) traverse the membrane as a helical segment. Residues 309–337 (GSFKLRGQRIFRMAPIHHHYELKGWPEPR) lie on the Cytoplasmic side of the membrane. Residues 338-358 (VIVRFWIISLMLVLIGLATLK) form a helical membrane-spanning segment. Over 359 to 360 (VR) the chain is Periplasmic.

It belongs to the glycosyltransferase 4 family. MraY subfamily. Mg(2+) is required as a cofactor.

It localises to the cell inner membrane. The enzyme catalyses UDP-N-acetyl-alpha-D-muramoyl-L-alanyl-gamma-D-glutamyl-meso-2,6-diaminopimeloyl-D-alanyl-D-alanine + di-trans,octa-cis-undecaprenyl phosphate = di-trans,octa-cis-undecaprenyl diphospho-N-acetyl-alpha-D-muramoyl-L-alanyl-D-glutamyl-meso-2,6-diaminopimeloyl-D-alanyl-D-alanine + UMP. It participates in cell wall biogenesis; peptidoglycan biosynthesis. Catalyzes the initial step of the lipid cycle reactions in the biosynthesis of the cell wall peptidoglycan: transfers peptidoglycan precursor phospho-MurNAc-pentapeptide from UDP-MurNAc-pentapeptide onto the lipid carrier undecaprenyl phosphate, yielding undecaprenyl-pyrophosphoryl-MurNAc-pentapeptide, known as lipid I. The protein is Phospho-N-acetylmuramoyl-pentapeptide-transferase of Salmonella agona (strain SL483).